The sequence spans 199 residues: Protein-methionine-sulfoxide reductase heme-binding subunit MsrQ (199 aa).

5 helical membrane-spanning segments follow: residues 10 to 30 (WLKVAIWLAAALPFLWLILSV), 79 to 99 (LLGLWCFAWGTLHLVSYSVLE), 118 to 138 (LTLGIISWLLLLSLAVTSTLW), 147 to 167 (WQKLHNLVYVVAILAPIHYLW), and 169 to 189 (VKTLSPLPIIYAVTAAILLAL).

This sequence belongs to the MsrQ family. In terms of assembly, heterodimer of a catalytic subunit (MsrP) and a heme-binding subunit (MsrQ). FMN is required as a cofactor. Heme b serves as cofactor.

It is found in the cell inner membrane. In terms of biological role, part of the MsrPQ system that repairs oxidized periplasmic proteins containing methionine sulfoxide residues (Met-O), using respiratory chain electrons. Thus protects these proteins from oxidative-stress damage caused by reactive species of oxygen and chlorine generated by the host defense mechanisms. MsrPQ is essential for the maintenance of envelope integrity under bleach stress, rescuing a wide series of structurally unrelated periplasmic proteins from methionine oxidation. MsrQ provides electrons for reduction to the reductase catalytic subunit MsrP, using the quinone pool of the respiratory chain. The sequence is that of Protein-methionine-sulfoxide reductase heme-binding subunit MsrQ from Yersinia enterocolitica serotype O:8 / biotype 1B (strain NCTC 13174 / 8081).